A 115-amino-acid chain; its full sequence is Large ribosomal subunit protein bL19 (115 aa).

The protein belongs to the bacterial ribosomal protein bL19 family.

In terms of biological role, this protein is located at the 30S-50S ribosomal subunit interface and may play a role in the structure and function of the aminoacyl-tRNA binding site. The polypeptide is Large ribosomal subunit protein bL19 (Parabacteroides distasonis (strain ATCC 8503 / DSM 20701 / CIP 104284 / JCM 5825 / NCTC 11152)).